We begin with the raw amino-acid sequence, 337 residues long: Equatorin (337 aa).

A signal peptide spans 1 to 20 (MDFILLIILSGVFLPDIISL). Over 21-183 (QPIVGQEPGV…LSELEEIKLK (163 aa)) the chain is Lumenal. The interval 110 to 130 (SKPTASGEEEKPSESSRKTST) is disordered. A compositionally biased stretch (basic and acidic residues) spans 117-126 (EEEKPSESSR). Asparagine 145 carries N-linked (GlcNAc...) asparagine glycosylation. A helical transmembrane segment spans residues 184–204 (LMLGISLMTLVLLIPLLIFCF). The Cytoplasmic portion of the chain corresponds to 205-337 (ATLYKLRHLR…LLNKEGSPSN (133 aa)). Residues 259-283 (SSEMRRSRTRRSKSKPMDFSAGSNQ) form a disordered region. Serine 336 is modified (phosphoserine).

As to quaternary structure, interacts with SNAP25. Post-translationally, highly N- and O-glycosylated; contains sialic acid. MN9 epitope is O-glycosylated. In terms of tissue distribution, sperm specific, including germ cells (at protein level).

The protein localises to the cytoplasmic vesicle. It localises to the secretory vesicle. The protein resides in the acrosome membrane. Its subcellular location is the acrosome inner membrane. It is found in the acrosome outer membrane. The protein localises to the nucleus. It localises to the cytoplasm. In terms of biological role, acrosomal membrane-anchored protein involved in the process of fertilization and in acrosome biogenesis. The sequence is that of Equatorin (Eqtn) from Mus musculus (Mouse).